We begin with the raw amino-acid sequence, 394 residues long: Multidrug resistance protein D (394 aa).

The Cytoplasmic segment spans residues 1 to 8; the sequence is MKRQRNVN. A helical membrane pass occupies residues 9–29; it reads LLLMLVLLVAVGQMAQTIYIP. Over 30-46 the chain is Periplasmic; that stretch reads AIADMARDLNVREGAVQ. Residues 47 to 67 form a helical membrane-spanning segment; it reads SVMGAYLLTYGVSQLFYGPIS. Topologically, residues 68–73 are cytoplasmic; sequence DRVGRR. Residues 74 to 94 form a helical membrane-spanning segment; it reads PVILVGMSIFMLATLVAVTTS. Ser-95 is a topological domain (periplasmic). The helical transmembrane segment at 96-116 threads the bilayer; it reads LTVLIAASAMQGMGTGVGGVM. Residues 117-134 are Cytoplasmic-facing; the sequence is ARTLPRDLYERTQLRHAN. A helical membrane pass occupies residues 135 to 155; it reads SLLNMGILVSPLLAPLIGGLL. Residues 156-162 are Periplasmic-facing; sequence DTMWNWR. A helical transmembrane segment spans residues 163-183; sequence ACYLFLLVLCAGVTFSMARWM. At 184 to 212 the chain is on the cytoplasmic side; sequence PETRPVDAPRTRLLTSYKTLFGNSGFNCY. A helical membrane pass occupies residues 213-233; it reads LLMLIGGLAGIAAFEACSGVL. Topologically, residues 234-242 are periplasmic; that stretch reads MGAVLGLSS. Residues 243 to 263 form a helical membrane-spanning segment; that stretch reads MTVSILFILPIPAAFFGAWFA. Over 264-276 the chain is Cytoplasmic; sequence GRPNKRFSTLMWQ. The helical transmembrane segment at 277-297 threads the bilayer; it reads SVICCLLAGLLMWIPDWFGVM. A topological domain (periplasmic) is located at residue Asn-298. The chain crosses the membrane as a helical span at residues 299 to 319; that stretch reads VWTLLVPAALFFFGAGMLFPL. The Cytoplasmic portion of the chain corresponds to 320 to 329; sequence ATSGAMEPFP. Residues 330 to 350 form a helical membrane-spanning segment; it reads FLAGTAGALVGGLQNIGSGVL. At 351-364 the chain is on the periplasmic side; sequence ASLSAMLPQTGQGS. A helical transmembrane segment spans residues 365-385; sequence LGLLMTLMGLLIVLCWLPLAT. Topologically, residues 386–394 are cytoplasmic; that stretch reads RMSHQGQPV.

Belongs to the major facilitator superfamily.

Its subcellular location is the cell inner membrane. In terms of biological role, multidrug resistance pump that participates in a low energy shock adaptive response. The polypeptide is Multidrug resistance protein D (emrD) (Escherichia coli (strain K12)).